Here is a 416-residue protein sequence, read N- to C-terminus: Gamma-glutamyl phosphate reductase (416 aa).

The protein belongs to the gamma-glutamyl phosphate reductase family.

It localises to the cytoplasm. The catalysed reaction is L-glutamate 5-semialdehyde + phosphate + NADP(+) = L-glutamyl 5-phosphate + NADPH + H(+). Its pathway is amino-acid biosynthesis; L-proline biosynthesis; L-glutamate 5-semialdehyde from L-glutamate: step 2/2. In terms of biological role, catalyzes the NADPH-dependent reduction of L-glutamate 5-phosphate into L-glutamate 5-semialdehyde and phosphate. The product spontaneously undergoes cyclization to form 1-pyrroline-5-carboxylate. The polypeptide is Gamma-glutamyl phosphate reductase (Vibrio parahaemolyticus serotype O3:K6 (strain RIMD 2210633)).